A 302-amino-acid polypeptide reads, in one-letter code: Ribosomal RNA small subunit methyltransferase H (302 aa).

S-adenosyl-L-methionine contacts are provided by residues 32–34 (GGH), Asp-51, Phe-78, Asp-97, and Gln-104.

It belongs to the methyltransferase superfamily. RsmH family.

It is found in the cytoplasm. The enzyme catalyses cytidine(1402) in 16S rRNA + S-adenosyl-L-methionine = N(4)-methylcytidine(1402) in 16S rRNA + S-adenosyl-L-homocysteine + H(+). Its function is as follows. Specifically methylates the N4 position of cytidine in position 1402 (C1402) of 16S rRNA. This chain is Ribosomal RNA small subunit methyltransferase H, found in Nitratiruptor sp. (strain SB155-2).